The chain runs to 401 residues: Imidazolonepropionase (401 aa).

Histidine 66 and histidine 68 together coordinate Fe(3+). Positions 66 and 68 each coordinate Zn(2+). 4-imidazolone-5-propanoate-binding residues include arginine 75, tyrosine 138, and histidine 171. Position 138 (tyrosine 138) interacts with N-formimidoyl-L-glutamate. Position 236 (histidine 236) interacts with Fe(3+). Zn(2+) is bound at residue histidine 236. Residue glutamine 239 coordinates 4-imidazolone-5-propanoate. Aspartate 311 is a Fe(3+) binding site. Residue aspartate 311 coordinates Zn(2+). Asparagine 313 and glycine 315 together coordinate N-formimidoyl-L-glutamate. Threonine 316 provides a ligand contact to 4-imidazolone-5-propanoate.

This sequence belongs to the metallo-dependent hydrolases superfamily. HutI family. The cofactor is Zn(2+). Requires Fe(3+) as cofactor.

It localises to the cytoplasm. It carries out the reaction 4-imidazolone-5-propanoate + H2O = N-formimidoyl-L-glutamate. It participates in amino-acid degradation; L-histidine degradation into L-glutamate; N-formimidoyl-L-glutamate from L-histidine: step 3/3. In terms of biological role, catalyzes the hydrolytic cleavage of the carbon-nitrogen bond in imidazolone-5-propanoate to yield N-formimidoyl-L-glutamate. It is the third step in the universal histidine degradation pathway. This chain is Imidazolonepropionase, found in Pseudomonas savastanoi pv. phaseolicola (strain 1448A / Race 6) (Pseudomonas syringae pv. phaseolicola (strain 1448A / Race 6)).